A 915-amino-acid chain; its full sequence is Alpha-xylosidase 1 (915 aa).

The signal sequence occupies residues 1–27 (MASSSSSLAFSLSLLLALILCFSPTQS). Residues asparagine 153, asparagine 304, and asparagine 375 are each glycosylated (N-linked (GlcNAc...) asparagine). Active-site residues include aspartate 440 and glutamate 443. Residues asparagine 476 and asparagine 490 are each glycosylated (N-linked (GlcNAc...) asparagine). The active-site Proton donor is aspartate 563. N-linked (GlcNAc...) asparagine glycosylation is found at asparagine 819, asparagine 888, and asparagine 907.

Belongs to the glycosyl hydrolase 31 family. Expressed in roots, stems, leaves, flowers and siliques. Expressed in cell types undergoing cell wall modifications, including trichomes, vasculature, stomata, and elongating anther filaments. Not detected in pollen.

The protein resides in the secreted. The protein localises to the cell wall. It is found in the extracellular space. Its subcellular location is the apoplast. The enzyme catalyses Hydrolysis of terminal, non-reducing alpha-D-xylose residues with release of alpha-D-xylose.. Glycoside hydrolase releasing xylosyl residues from xyloglucan oligosaccharides at the non-reducing end. Has alpha-xylosidase activity against xylan oligosaccharides. Also has alpha-glucosidase activity against p-nitrophenyl-alpha-D-glucopyranoside. No activity against p-nitrophenyl-D-xyloside. This chain is Alpha-xylosidase 1, found in Arabidopsis thaliana (Mouse-ear cress).